A 128-amino-acid polypeptide reads, in one-letter code: Disintegrin lebein-2-alpha (128 aa).

The signal sequence occupies residues methionine 1 to serine 20. Positions isoleucine 21–alanine 46 are excised as a propeptide. Residues methionine 47–serine 111 enclose the Disintegrin domain. Cystine bridges form between cysteine 53-cysteine 76, cysteine 67-cysteine 73, cysteine 72-cysteine 97, and cysteine 85-cysteine 104. Residues methionine 89–aspartate 91 carry the Cell attachment site; atypical (MLD) motif. Positions glutamate 112 to methionine 128 are excised as a propeptide.

Belongs to the disintegrin family. Dimeric disintegrin subfamily. In terms of assembly, heterodimer with subunit beta; disulfide-linked. As to expression, expressed by the venom gland.

The protein resides in the secreted. Functionally, inhibits ADP-induced human platelet aggregation. Antagonist of alpha-IIb/beta-3 (ITGA2B/ITGB3). Also avidly binds to the laminin-binding beta-1 integrins (alpha-3/beta-1 (ITGA3/ITGB1), alpha-6/beta-1 (ITGA6/ITGB1), and alpha-7/beta-1 (ITGA7/ITGB1)) in an RGD-independent manner. This chain is Disintegrin lebein-2-alpha, found in Macrovipera lebetinus (Levantine viper).